A 645-amino-acid polypeptide reads, in one-letter code: UPF0313 protein CLM_0251 (645 aa).

The 272-residue stretch at 295–566 folds into the Radical SAM core domain; it reads AIKEVKFSIT…RMQRALLQFS (272 aa). Positions 309, 313, and 316 each coordinate [4Fe-4S] cluster. Residues 598–645 form a disordered region; it reads NKPYKKSHKKNNAKNNNNHYNKNNNYNKNKDISKKNKKNSLSKHKKRK. Over residues 600-609 the composition is skewed to basic residues; sequence PYKKSHKKNN. Residues 610 to 624 are compositionally biased toward low complexity; sequence AKNNNNHYNKNNNYN. The span at 632–645 shows a compositional bias: basic residues; that stretch reads KNKKNSLSKHKKRK.

Belongs to the UPF0313 family. The cofactor is [4Fe-4S] cluster.

The protein is UPF0313 protein CLM_0251 of Clostridium botulinum (strain Kyoto / Type A2).